A 644-amino-acid chain; its full sequence is Chaperone protein DnaK (644 aa).

Disordered regions lie at residues 490–533 (QEEA…ELDD) and 570–644 (EELQ…EDDA). A compositionally biased stretch (basic and acidic residues) spans 492 to 513 (EAEKHKEEDEARRERIEARNEA). The segment covering 523–533 (LLEENEEELDD) has biased composition (acidic residues). Gly residues predominate over residues 588–622 (GPGGAGGAAGAGPGGMGGMGGAAGPGGAGGAGPGG). The span at 624 to 644 (DADDEEYVDADFEDVDDEDDA) shows a compositional bias: acidic residues.

Belongs to the heat shock protein 70 family.

In terms of biological role, acts as a chaperone. The chain is Chaperone protein DnaK from Halorubrum lacusprofundi (strain ATCC 49239 / DSM 5036 / JCM 8891 / ACAM 34).